The following is a 339-amino-acid chain: Ketol-acid reductoisomerase (NADP(+)) (339 aa).

Residues 1–182 form the KARI N-terminal Rossmann domain; the sequence is MRVYYDRDAD…GGGRAGIIET (182 aa). NADP(+)-binding positions include 24-27, arginine 48, serine 51, serine 53, and 83-86; these read YGSQ and DELQ. The active site involves histidine 108. Glycine 134 lines the NADP(+) pocket. A KARI C-terminal knotted domain is found at 183–328; it reads SFREETETDL…ARLRDMMPWI (146 aa). Positions 191, 195, 227, and 231 each coordinate Mg(2+). Residue serine 252 participates in substrate binding.

The protein belongs to the ketol-acid reductoisomerase family. Requires Mg(2+) as cofactor.

The enzyme catalyses (2R)-2,3-dihydroxy-3-methylbutanoate + NADP(+) = (2S)-2-acetolactate + NADPH + H(+). It catalyses the reaction (2R,3R)-2,3-dihydroxy-3-methylpentanoate + NADP(+) = (S)-2-ethyl-2-hydroxy-3-oxobutanoate + NADPH + H(+). The protein operates within amino-acid biosynthesis; L-isoleucine biosynthesis; L-isoleucine from 2-oxobutanoate: step 2/4. It participates in amino-acid biosynthesis; L-valine biosynthesis; L-valine from pyruvate: step 2/4. Its function is as follows. Involved in the biosynthesis of branched-chain amino acids (BCAA). Catalyzes an alkyl-migration followed by a ketol-acid reduction of (S)-2-acetolactate (S2AL) to yield (R)-2,3-dihydroxy-isovalerate. In the isomerase reaction, S2AL is rearranged via a Mg-dependent methyl migration to produce 3-hydroxy-3-methyl-2-ketobutyrate (HMKB). In the reductase reaction, this 2-ketoacid undergoes a metal-dependent reduction by NADPH to yield (R)-2,3-dihydroxy-isovalerate. The polypeptide is Ketol-acid reductoisomerase (NADP(+)) (Afipia carboxidovorans (strain ATCC 49405 / DSM 1227 / KCTC 32145 / OM5) (Oligotropha carboxidovorans)).